The primary structure comprises 865 residues: Leucine--tRNA ligase (865 aa).

A 'HIGH' region motif is present at residues proline 44–histidine 54. Positions lysine 625 to serine 629 match the 'KMSKS' region motif. Lysine 628 is a binding site for ATP.

The protein belongs to the class-I aminoacyl-tRNA synthetase family.

The protein localises to the cytoplasm. It carries out the reaction tRNA(Leu) + L-leucine + ATP = L-leucyl-tRNA(Leu) + AMP + diphosphate. This chain is Leucine--tRNA ligase, found in Maricaulis maris (strain MCS10) (Caulobacter maris).